Reading from the N-terminus, the 240-residue chain is Uridylate kinase (240 aa).

13–16 (KFSG) contacts ATP. UMP is bound at residue Gly55. ATP is bound by residues Gly56 and Arg60. Residues Asp76 and 137-144 (TGNPFFTT) each bind UMP. Positions 164, 170, and 173 each coordinate ATP.

It belongs to the UMP kinase family. Homohexamer.

The protein resides in the cytoplasm. The catalysed reaction is UMP + ATP = UDP + ADP. It participates in pyrimidine metabolism; CTP biosynthesis via de novo pathway; UDP from UMP (UMPK route): step 1/1. Inhibited by UTP. In terms of biological role, catalyzes the reversible phosphorylation of UMP to UDP. This is Uridylate kinase from Helicobacter pylori (strain J99 / ATCC 700824) (Campylobacter pylori J99).